Reading from the N-terminus, the 297-residue chain is MNQKTPSTVEEIRIALQELGLSTNGNKEKLKRRWKFREKRLEEKRKQERYQKFSTSNENKTCLRYLLIVDVEATCEEGCGFSFENEIIELPCLLFDLIEKSIIDEFHSYVRPSMNPTLSDYCKSLTGIQQCTVDKAPIFSDVLEELFIFLRKHSNILVPSVDEIEIIEPLKSVPRTQPKNWAWACDGPWDMASFLAKQFKYDKMPIPDWIKGPFVDIRSFYKDVYRVPRTNINGMLEHWGLQFEGSEHRGIDDARNLSRIVKKMCSENVEFECNRWWMEYEKNGWIPNRSYPPYFAS.

The 35-residue stretch at 4–38 (KTPSTVEEIRIALQELGLSTNGNKEKLKRRWKFRE) folds into the SAP domain. The 86-residue stretch at 68 to 153 (IVDVEATCEE…EELFIFLRKH (86 aa)) folds into the Exonuclease domain. Residues Asp-70 and Glu-72 each contribute to the Mg(2+) site. Glu-72 acts as the Proton acceptor in catalysis. AMP is bound by residues Glu-72 and Ala-73. Asp-190 lines the Mg(2+) pocket. Residue His-248 is the Proton acceptor of the active site. His-248 provides a ligand contact to AMP. Mg(2+) is bound at residue Asp-253.

Requires Mg(2+) as cofactor.

The protein localises to the cytoplasm. RNA exonuclease that acts as a negative regulator of RNA interference (RNAi). Acts by degrading the 3'-overhangs of double-stranded short interfering RNAs (siRNAs). Represses the accumulation of heterochromatic siRNAs leading to negative regulation of the RNAi-mediated heterochromoatin assembly. Also involved in rRNA biogenesis, trimming the 5.8S ribosomal RNA (rRNA) from a slightly longer pre-5.8S RNA in the cytoplasm. This chain is 3'-5' exonuclease eri1 (eri1), found in Schizosaccharomyces pombe (strain 972 / ATCC 24843) (Fission yeast).